Here is a 362-residue protein sequence, read N- to C-terminus: D-alanine--D-alanine ligase (362 aa).

Residues 141–346 (KNIFAEAGLN…YPELIEELIR (206 aa)) form the ATP-grasp domain. 174 to 229 (EEALGYPCFVKPANLGSSVGINKCKDREELEKAFEEAFQFDRKIIVEENIIGREVE) provides a ligand contact to ATP. Residues aspartate 300, glutamate 313, and asparagine 315 each contribute to the Mg(2+) site.

The protein belongs to the D-alanine--D-alanine ligase family. The cofactor is Mg(2+). Requires Mn(2+) as cofactor.

Its subcellular location is the cytoplasm. It carries out the reaction 2 D-alanine + ATP = D-alanyl-D-alanine + ADP + phosphate + H(+). It participates in cell wall biogenesis; peptidoglycan biosynthesis. Cell wall formation. In Bacillus cytotoxicus (strain DSM 22905 / CIP 110041 / 391-98 / NVH 391-98), this protein is D-alanine--D-alanine ligase.